The following is a 721-amino-acid chain: Polyribonucleotide nucleotidyltransferase (721 aa).

Residues aspartate 495 and aspartate 501 each coordinate Mg(2+). The region spanning 562–621 (PRLLSFRIDPELIGTVIGPGGRTIKGITERTNTKIDIEDSGIVTIASHDGAAAEEAQKII) is the KH domain. The S1 motif domain occupies 631–699 (GEMFSGSITR…NRGRINLTLR (69 aa)). The disordered stretch occupies residues 700-721 (GVPQSGESTEVEPQPTPVAPLS).

The protein belongs to the polyribonucleotide nucleotidyltransferase family. Mg(2+) is required as a cofactor.

Its subcellular location is the cytoplasm. It carries out the reaction RNA(n+1) + phosphate = RNA(n) + a ribonucleoside 5'-diphosphate. Involved in mRNA degradation. Catalyzes the phosphorolysis of single-stranded polyribonucleotides processively in the 3'- to 5'-direction. This chain is Polyribonucleotide nucleotidyltransferase, found in Synechococcus sp. (strain CC9902).